A 456-amino-acid polypeptide reads, in one-letter code: Amino acid transporter AVT6B (456 aa).

Transmembrane regions (helical) follow at residues 37–57, 58–78, 118–138, 164–184, 191–211, 236–256, 273–293, 328–348, 365–385, 388–408, and 423–443; these read FSGA…MALP, ATMK…MAFL, ILVS…DVLA, TFVL…FKRI, SAIS…ITII, LFTV…VHSI, ALAM…LLFG, LMLV…GLIF, SITA…PSIW, FQFT…AAVI, and IAIC…YSDA.

This sequence belongs to the amino acid/polyamine transporter 2 family. Amino acid/auxin permease (AAAP) (TC 2.A.18.6) subfamily.

Its subcellular location is the membrane. This Arabidopsis thaliana (Mouse-ear cress) protein is Amino acid transporter AVT6B.